A 394-amino-acid chain; its full sequence is Flagellin B (394 aa).

It belongs to the bacterial flagellin family.

The protein resides in the secreted. Its subcellular location is the bacterial flagellum. Its function is as follows. Flagellin is the subunit protein which polymerizes to form the filaments of bacterial flagella. The sequence is that of Flagellin B (flaB) from Rhizobium meliloti (strain 1021) (Ensifer meliloti).